A 173-amino-acid polypeptide reads, in one-letter code: Protein-export protein SecB 1 (173 aa).

This sequence belongs to the SecB family. In terms of assembly, homotetramer, a dimer of dimers. One homotetramer interacts with 1 SecA dimer.

It is found in the cytoplasm. One of the proteins required for the normal export of preproteins out of the cell cytoplasm. It is a molecular chaperone that binds to a subset of precursor proteins, maintaining them in a translocation-competent state. It also specifically binds to its receptor SecA. This is Protein-export protein SecB 1 from Gluconobacter oxydans (strain 621H) (Gluconobacter suboxydans).